We begin with the raw amino-acid sequence, 277 residues long: Outer membrane lipoprotein 1 (277 aa).

The N-terminal stretch at 1-19 is a signal peptide; the sequence is MSFKKILGVALVSALALTA. A lipid anchor (N-palmitoyl cysteine) is attached at cysteine 20. The S-diacylglycerol cysteine moiety is linked to residue cysteine 20.

It belongs to the NlpA lipoprotein family.

The protein localises to the cell outer membrane. In Mannheimia haemolytica (Pasteurella haemolytica), this protein is Outer membrane lipoprotein 1 (plpA).